A 147-amino-acid polypeptide reads, in one-letter code: 3-dehydroquinate dehydratase (147 aa).

The active-site Proton acceptor is Tyr24. Residues Asn73, His79, and Asp86 each coordinate substrate. His99 serves as the catalytic Proton donor. Residues 100-101 and Arg110 each bind substrate; that span reads LS.

It belongs to the type-II 3-dehydroquinase family. In terms of assembly, homododecamer.

The enzyme catalyses 3-dehydroquinate = 3-dehydroshikimate + H2O. It functions in the pathway metabolic intermediate biosynthesis; chorismate biosynthesis; chorismate from D-erythrose 4-phosphate and phosphoenolpyruvate: step 3/7. Functionally, catalyzes a trans-dehydration via an enolate intermediate. In Hyphomonas neptunium (strain ATCC 15444), this protein is 3-dehydroquinate dehydratase.